A 147-amino-acid polypeptide reads, in one-letter code: Large ribosomal subunit protein uL15 (147 aa).

The interval 1–57 (MRLEDLRPTPGSMKKRKRVGRGPGSGHGKTSGRGHKGQKARGTGKVHPWFEGGQTPL) is disordered. Basic residues predominate over residues 30–44 (TSGRGHKGQKARGTG).

It belongs to the universal ribosomal protein uL15 family. As to quaternary structure, part of the 50S ribosomal subunit.

In terms of biological role, binds to the 23S rRNA. In Thermotoga neapolitana (strain ATCC 49049 / DSM 4359 / NBRC 107923 / NS-E), this protein is Large ribosomal subunit protein uL15.